A 76-amino-acid chain; its full sequence is MLKLRLKKYGRKGQASYRLVVMPSTSKRDGRAIEELGFYNPCTNETHINVERVKVRLSQGVKPTSTVKNLLDKVIF.

This sequence belongs to the bacterial ribosomal protein bS16 family.

It is found in the plastid. It localises to the chloroplast. This Guillardia theta (Cryptophyte) protein is Small ribosomal subunit protein bS16c.